Reading from the N-terminus, the 93-residue chain is Large ribosomal subunit protein mL41 (93 aa).

The transit peptide at 1 to 13 directs the protein to the mitochondrion; that stretch reads MHQSLLCFGARRL.

This sequence belongs to the mitochondrion-specific ribosomal protein mL41 family. Component of the mitochondrial large ribosomal subunit (mt-LSU). Mature yeast 74S mitochondrial ribosomes consist of a small (37S) and a large (54S) subunit. The 37S small subunit contains a 15S ribosomal RNA (15S mt-rRNA) and at least 32 different proteins. The 54S large subunit contains a 21S rRNA (21S mt-rRNA) and at least 45 different proteins.

It is found in the mitochondrion. In terms of biological role, component of the mitochondrial ribosome (mitoribosome), a dedicated translation machinery responsible for the synthesis of mitochondrial genome-encoded proteins, including at least some of the essential transmembrane subunits of the mitochondrial respiratory chain. The mitoribosomes are attached to the mitochondrial inner membrane and translation products are cotranslationally integrated into the membrane. The sequence is that of Large ribosomal subunit protein mL41 (mrpl27) from Schizosaccharomyces pombe (strain 972 / ATCC 24843) (Fission yeast).